The primary structure comprises 393 residues: Squamosa promoter-binding-like protein 11 (393 aa).

Residues 74-96 (QSTSINSSSPEAKRCKLASESSP) form a disordered region. Residues 172-249 (VPRCQIDGCE…SHHNARRRKP (78 aa)) form an SBP-type zinc finger. Zn(2+) contacts are provided by C175, C180, C197, H200, C216, C219, H223, and C235. Positions 232–248 (KRSCRKRLSHHNARRRK) match the Bipartite nuclear localization signal motif.

Zn(2+) is required as a cofactor.

The protein localises to the nucleus. Trans-acting factor that binds specifically to the consensus nucleotide sequence 5'-TNCGTACAA-3'. This chain is Squamosa promoter-binding-like protein 11 (SPL11), found in Arabidopsis thaliana (Mouse-ear cress).